The primary structure comprises 153 residues: Transcriptional repressor NrdR (153 aa).

A zinc finger spans residues 3–34 (CPSCSHNGTRVLDSRPVDEGRSIRRRRECESC). The region spanning 49–139 (LIVVKKEGTR…VYRQFKDLNV (91 aa)) is the ATP-cone domain.

It belongs to the NrdR family. Zn(2+) serves as cofactor.

Its function is as follows. Negatively regulates transcription of bacterial ribonucleotide reductase nrd genes and operons by binding to NrdR-boxes. The protein is Transcriptional repressor NrdR of Bacillus anthracis (strain A0248).